Here is a 93-residue protein sequence, read N- to C-terminus: UPF0358 protein BBR47_22520 (93 aa).

It belongs to the UPF0358 family.

This chain is UPF0358 protein BBR47_22520, found in Brevibacillus brevis (strain 47 / JCM 6285 / NBRC 100599).